Here is a 43-residue protein sequence, read N- to C-terminus: MRDLKTYLSVAPVLSTLWFGSLAGLLIEINRLFPDGLTFPSSY.

Residues 7 to 27 (YLSVAPVLSTLWFGSLAGLLI) traverse the membrane as a helical segment.

This sequence belongs to the PsaJ family.

The protein localises to the plastid. It localises to the chloroplast thylakoid membrane. In terms of biological role, may help in the organization of the PsaE and PsaF subunits. The polypeptide is Photosystem I reaction center subunit IX (Aethionema cordifolium (Lebanon stonecress)).